The chain runs to 301 residues: Averufin oxidase A (301 aa).

An N-terminal signal peptide occupies residues 1-23; sequence MPTYALLGATGATGSAILRCLLA. Asn-62, Asn-86, and Asn-190 each carry an N-linked (GlcNAc...) asparagine glycan.

The protein belongs to the avfA family.

It participates in mycotoxin biosynthesis. In terms of biological role, averufin oxidase A; part of the fragmented gene cluster that mediates the biosynthesis of dothistromin (DOTH), a polyketide toxin very similar in structure to the aflatoxin precursor, versicolorin B. The first step of the pathway is the conversion of acetate to norsolorinic acid (NOR) and requires the fatty acid synthase subunits hexA and hexB, as well as the polyketide synthase pksA. PksA combines a hexanoyl starter unit and 7 malonyl-CoA extender units to synthesize the precursor NOR. The hexanoyl starter unit is provided to the acyl-carrier protein (ACP) domain by the fungal fatty acid synthase hexA/hexB. The second step is the conversion of NOR to averantin (AVN) and requires the norsolorinic acid ketoreductase nor1, which catalyzes the dehydration of norsolorinic acid to form (1'S)-averantin. The cytochrome P450 monooxygenase avnA then catalyzes the hydroxylation of AVN to 5'hydroxyaverantin (HAVN). The next step is performed by adhA that transforms HAVN to averufin (AVF). Averufin might then be converted to hydroxyversicolorone by cypX and avfA. Hydroxyversicolorone is further converted versiconal hemiacetal acetate (VHA) by moxY. VHA is then the substrate for the versiconal hemiacetal acetate esterase est1 to yield versiconal (VAL). Versicolorin B synthase vbsA then converts VAL to versicolorin B (VERB) by closing the bisfuran ring. Then, the activity of the versicolorin B desaturase verB leads to versicolorin A (VERA). DotB, a predicted chloroperoxidase, may perform epoxidation of the A-ring of VERA. Alternatively, a cytochrome P450, such as cypX or avnA could catalyze this step. It is also possible that another, uncharacterized, cytochrome P450 enzyme is responsible for this step. Opening of the epoxide could potentially be achieved by the epoxide hydrolase epoA. However, epoA seems not to be required for DOTH biosynthesis, but other epoxide hydrolases may have the ability to complement this hydrolysis. Alternatively, opening of the epoxide ring could be achieved non-enzymatically. The next step is the deoxygenation of ring A to yield the 5,8-dihydroxyanthraquinone which is most likely catalyzed by the NADPH dehydrogenase encoded by ver1. The last stages of DOTH biosynthesis are proposed to involve hydroxylation of the bisfuran. OrdB and norB might have oxidative roles here. An alternative possibility is that cytochrome P450 monoogenases such as avnA and cypX might perform these steps in addition to previously proposed steps. The chain is Averufin oxidase A from Dothistroma septosporum (Red band needle blight fungus).